Reading from the N-terminus, the 578-residue chain is Protein LIKE EARLY STARVATION, chloroplastic (578 aa).

A chloroplast-targeting transit peptide spans 1-56; the sequence is MALRLGVSIGAALGSSHWDDGQRVRQRDFSASVNFTAPVTSRRSLRGSRTGVRILR. Disordered stretches follow at residues 146-166 and 187-206; these read NNSGDGKEGFPNEDNTVTSEV and SETSGTETPGPDFWSWTPPQ.

It belongs to the ESV1 family. In terms of tissue distribution, expressed ubiquitously.

It localises to the plastid. Its subcellular location is the chloroplast stroma. Binds preferentially to highly ordered alpha-glucans, such as starch and crystalline maltodextrins. Involved in the organization of the starch granule matrix, thus influencing starch turnover by modulating the accessibility of starch polymers to modifying and degrading enzymes involved in phosphorylation, hydrolyzes and synthesis, including starch synthases (SSI and SSIII), starch phosphorylases (PHS1), isoamylase, beta-amylase, glucan water dikinase (GWD) and phosphoglucan water dikinase (PWD). This Arabidopsis thaliana (Mouse-ear cress) protein is Protein LIKE EARLY STARVATION, chloroplastic.